The primary structure comprises 534 residues: CTP synthase (534 aa).

The interval 1-267 is amidoligase domain; it reads MTKYIFVTGG…DQIVCDHLKL (267 aa). A CTP-binding site is contributed by S13. S13 lines the UTP pocket. 14–19 serves as a coordination point for ATP; that stretch reads SIGKGI. Position 54 (Y54) interacts with L-glutamine. D71 is an ATP binding site. Positions 71 and 141 each coordinate Mg(2+). CTP-binding positions include 148 to 150, 188 to 193, and K224; these read DIE and KTKPTQ. Residues 188 to 193 and K224 each bind UTP; that span reads KTKPTQ. Residue 240-242 coordinates ATP; it reads RDV. The Glutamine amidotransferase type-1 domain maps to 292–534; it reads KIALVGKYVE…FVTAAIKNSN (243 aa). L-glutamine is bound at residue G354. C381 acts as the Nucleophile; for glutamine hydrolysis in catalysis. L-glutamine contacts are provided by residues 382-385, E405, and R463; that span reads LGMQ. Residues H508 and E510 contribute to the active site.

This sequence belongs to the CTP synthase family. Homotetramer.

The catalysed reaction is UTP + L-glutamine + ATP + H2O = CTP + L-glutamate + ADP + phosphate + 2 H(+). It catalyses the reaction L-glutamine + H2O = L-glutamate + NH4(+). It carries out the reaction UTP + NH4(+) + ATP = CTP + ADP + phosphate + 2 H(+). The protein operates within pyrimidine metabolism; CTP biosynthesis via de novo pathway; CTP from UDP: step 2/2. Allosterically activated by GTP, when glutamine is the substrate; GTP has no effect on the reaction when ammonia is the substrate. The allosteric effector GTP functions by stabilizing the protein conformation that binds the tetrahedral intermediate(s) formed during glutamine hydrolysis. Inhibited by the product CTP, via allosteric rather than competitive inhibition. Catalyzes the ATP-dependent amination of UTP to CTP with either L-glutamine or ammonia as the source of nitrogen. Regulates intracellular CTP levels through interactions with the four ribonucleotide triphosphates. This Streptococcus pyogenes serotype M1 protein is CTP synthase.